The following is a 324-amino-acid chain: R2-like ligand binding oxidase (324 aa).

Mn(2+)-binding residues include Glu79, Glu112, and His115. The 3-(O4'-tyrosyl)-valine (Val-Tyr) cross-link spans Val82–Tyr173. Glu112 contributes to the Fe cation binding site. Fe cation is bound by residues Glu178, Glu213, and His216. The segment at Pro304–Gly324 is disordered. The span at Leu307–Ala318 shows a compositional bias: basic and acidic residues.

Belongs to the ribonucleoside diphosphate reductase small chain family. R2-like ligand binding oxidase subfamily. Homodimer. Fe cation is required as a cofactor. Mn(2+) serves as cofactor.

Its function is as follows. Probable oxidase. This Rhodococcus jostii (strain RHA1) protein is R2-like ligand binding oxidase.